Consider the following 331-residue polypeptide: Ketol-acid reductoisomerase (NADP(+)) (331 aa).

Residues 2 to 182 (ARMYYDEDAN…GGTRGGVLET (181 aa)) form the KARI N-terminal Rossmann domain. NADP(+) is bound by residues 25-28 (YGSQ), Ser51, Ser53, and 83-86 (DEVQ). The active site involves His108. Residue Gly134 coordinates NADP(+). Residues 183-328 (TFREETETDL…KDLRAMFSWL (146 aa)) form the KARI C-terminal knotted domain. The Mg(2+) site is built by Asp191, Glu195, Glu227, and Glu231. Residue Ser252 coordinates substrate.

It belongs to the ketol-acid reductoisomerase family. The cofactor is Mg(2+).

It catalyses the reaction (2R)-2,3-dihydroxy-3-methylbutanoate + NADP(+) = (2S)-2-acetolactate + NADPH + H(+). The enzyme catalyses (2R,3R)-2,3-dihydroxy-3-methylpentanoate + NADP(+) = (S)-2-ethyl-2-hydroxy-3-oxobutanoate + NADPH + H(+). The protein operates within amino-acid biosynthesis; L-isoleucine biosynthesis; L-isoleucine from 2-oxobutanoate: step 2/4. It functions in the pathway amino-acid biosynthesis; L-valine biosynthesis; L-valine from pyruvate: step 2/4. Its function is as follows. Involved in the biosynthesis of branched-chain amino acids (BCAA). Catalyzes an alkyl-migration followed by a ketol-acid reduction of (S)-2-acetolactate (S2AL) to yield (R)-2,3-dihydroxy-isovalerate. In the isomerase reaction, S2AL is rearranged via a Mg-dependent methyl migration to produce 3-hydroxy-3-methyl-2-ketobutyrate (HMKB). In the reductase reaction, this 2-ketoacid undergoes a metal-dependent reduction by NADPH to yield (R)-2,3-dihydroxy-isovalerate. The protein is Ketol-acid reductoisomerase (NADP(+)) of Nostoc sp. (strain PCC 7120 / SAG 25.82 / UTEX 2576).